Reading from the N-terminus, the 351-residue chain is Silk gland factor 3 (351 aa).

2 disordered regions span residues 61–88 (ADPW…HDHR) and 131–154 (SSPR…TPTS). Basic and acidic residues predominate over residues 135 to 145 (DPLHHHAMERD). Positions 149 to 223 (EDTPTSDDLE…LLQKWLEEAD (75 aa)) constitute a POU-specific domain. The homeobox DNA-binding region spans 241 to 300 (KRKKRTSIEVSVKGALEQHFHKQPKPSAQEITSLADSLQLEKEVVRVWFCNRRQKEKRMT). Residues 314 to 351 (GHAHYGHGDVHGSPLQHSPPGLSPQHGLPQGAHTLAAH) are disordered.

It belongs to the POU transcription factor family. Class-3 subfamily. As to expression, restricted to the middle silk gland.

The protein resides in the nucleus. Functionally, involved in the transcriptional regulation of sericin-1 gene. In Bombyx mori (Silk moth), this protein is Silk gland factor 3 (SGF3).